The sequence spans 208 residues: Putative chemokine-related protein FP248 (208 aa).

An N-terminal signal peptide occupies residues 1–23 (MGTGGSLLCGCSLVLSCLCPSAS). Asn29 carries N-linked (GlcNAc...) asparagine glycosylation.

The protein localises to the secreted. This is Putative chemokine-related protein FP248 from Homo sapiens (Human).